Consider the following 329-residue polypeptide: DNA-directed RNA polymerase subunit alpha (329 aa).

The alpha N-terminal domain (alpha-NTD) stretch occupies residues M1–R235. The segment at F249–E329 is alpha C-terminal domain (alpha-CTD).

Belongs to the RNA polymerase alpha chain family. Homodimer. The RNAP catalytic core consists of 2 alpha, 1 beta, 1 beta' and 1 omega subunit. When a sigma factor is associated with the core the holoenzyme is formed, which can initiate transcription.

The catalysed reaction is RNA(n) + a ribonucleoside 5'-triphosphate = RNA(n+1) + diphosphate. Its function is as follows. DNA-dependent RNA polymerase catalyzes the transcription of DNA into RNA using the four ribonucleoside triphosphates as substrates. The protein is DNA-directed RNA polymerase subunit alpha of Enterobacter sp. (strain 638).